A 2537-amino-acid polypeptide reads, in one-letter code: Centrosomal protein of 192 kDa (2537 aa).

Disordered regions lie at residues 69 to 138 (FSVP…ATES) and 288 to 308 (HSSETTHKESEESQVICLPGT). Positions 70–81 (SVPSGSSPGSQS) are enriched in low complexity. The span at 106 to 122 (VESQRLSNALSKQSALQ) shows a compositional bias: polar residues. The span at 288 to 298 (HSSETTHKESE) shows a compositional bias: basic and acidic residues. The residue at position 812 (Ser-812) is a Phosphoserine. Disordered regions lie at residues 950 to 1021 (VTFE…QQQP), 1043 to 1064 (VSEPESSYPTTATDDALEDRKS), 1101 to 1158 (KGTL…WTSN), and 1182 to 1234 (ATSH…STVH). Over residues 960 to 970 (PKNSDLKNTSP) the composition is skewed to polar residues. Positions 984-1005 (FRPSTSPLSHSSPSEISGTSSS) are enriched in low complexity. Composition is skewed to polar residues over residues 1046-1055 (PESSYPTTAT) and 1103-1112 (TLSSIIQNNS). Over residues 1128 to 1141 (EYVKPDFRWSKDPS) the composition is skewed to basic and acidic residues. The span at 1142–1158 (SKSGNLLETSEVGWTSN) shows a compositional bias: polar residues. Over residues 1195 to 1207 (EDQRISPKDKSTA) the composition is skewed to basic and acidic residues. The segment covering 1213 to 1234 (GQVSHQTTSENQCTPIPSSTVH) has biased composition (polar residues). A phosphoserine mark is found at Ser-1755, Ser-2098, and Ser-2110. Pro-2313 is subject to Hydroxyproline.

Interacts with SHBG. Interacts with PLK4; this interaction mediates the formation of a ternary complex composed by PLK4, TENT5C and CEP192. Interacts with CCDC66. Post-translationally, hydroxylation by PHD1/EGLN2 at Pro-2313 promotes ubiquitination. In terms of processing, ubiquitinated by a SCF(SKP2) complex following proline hydroxylation. Ubiquitinated in a FBXL13-dependent manner, leading to proteasomal degradation.

It localises to the cytoplasm. The protein localises to the cytoskeleton. The protein resides in the microtubule organizing center. Its subcellular location is the centrosome. It is found in the centriole. In terms of biological role, required for mitotic centrosome maturation and bipolar spindle assembly. Appears to be a major regulator of pericentriolar material (PCM) recruitment, centrosome maturation, and centriole duplication. Centrosome-specific activating scaffold for AURKA and PLK1. The protein is Centrosomal protein of 192 kDa of Homo sapiens (Human).